A 410-amino-acid chain; its full sequence is Lipoyl synthase, mitochondrial (410 aa).

The [4Fe-4S] cluster site is built by cysteine 134, cysteine 139, cysteine 145, cysteine 165, cysteine 169, cysteine 172, and serine 390. In terms of domain architecture, Radical SAM core spans 148-379 (AGKSTAATAT…AKIGNDLGFL (232 aa)).

The protein belongs to the radical SAM superfamily. Lipoyl synthase family. The cofactor is [4Fe-4S] cluster.

The protein localises to the mitochondrion. It catalyses the reaction [[Fe-S] cluster scaffold protein carrying a second [4Fe-4S](2+) cluster] + N(6)-octanoyl-L-lysyl-[protein] + 2 oxidized [2Fe-2S]-[ferredoxin] + 2 S-adenosyl-L-methionine + 4 H(+) = [[Fe-S] cluster scaffold protein] + N(6)-[(R)-dihydrolipoyl]-L-lysyl-[protein] + 4 Fe(3+) + 2 hydrogen sulfide + 2 5'-deoxyadenosine + 2 L-methionine + 2 reduced [2Fe-2S]-[ferredoxin]. It functions in the pathway protein modification; protein lipoylation via endogenous pathway; protein N(6)-(lipoyl)lysine from octanoyl-[acyl-carrier-protein]: step 2/2. Its function is as follows. Catalyzes the radical-mediated insertion of two sulfur atoms into the C-6 and C-8 positions of the octanoyl moiety bound to the lipoyl domains of lipoate-dependent enzymes, thereby converting the octanoylated domains into lipoylated derivatives. This chain is Lipoyl synthase, mitochondrial, found in Schistosoma mansoni (Blood fluke).